A 146-amino-acid polypeptide reads, in one-letter code: MILKADVKGTGKKGQTVEVADGYARNYLIPRGLAVAASEGALRSIEAERKAQQEKQQRQVAELSALRDRLDGQTIQLRAKCGEGGRLFGSVTNKDVADAIARHIGKPFDRKMVELDAPIKTLGVHLVTLRFGHNITGKVNVEVLPE.

The protein belongs to the bacterial ribosomal protein bL9 family.

Its function is as follows. Binds to the 23S rRNA. In Symbiobacterium thermophilum (strain DSM 24528 / JCM 14929 / IAM 14863 / T), this protein is Large ribosomal subunit protein bL9.